Reading from the N-terminus, the 102-residue chain is MSLTEDNNNTTITIAKGENKEIILHGNPTTGYSWVVDSCEGLSNTVEYVADQHAPGICGCGGKYHIKITGTQTGEGKIVLVYRRPWAPNANDRTFTLKVNVQ.

Residues 27–32 carry the BC loop motif; it reads NPTTGY. Residues 51–61 carry the DE loop motif; that stretch reads DQHAPGICGCG. The short motif at 85–93 is the FG loop element; the sequence is PWAPNANDR.

This sequence belongs to the protease inhibitor I42 family. In terms of assembly, monomer. During oxidative conditions, forms homooligomers; disulfide-linked. Interacts with cysteine protease CP2. Interacts with cysteine protease CP5. Post-translationally, during oxidative conditions, cys-39, cys-58 and cys-60 react to form intra- and inter-molecular disulfide bonds resulting in the loss of the protein inhibitory activity.

It is found in the cytoplasm. Functionally, cysteine protease inhibitor. Inhibits cysteine proteases CP1, CP2 and CP5. May protect the cytosol against cysteine proteases released by damaged intracellular vesicles. In Entamoeba histolytica (strain ATCC 30459 / HM-1:IMSS / ABRM), this protein is Amoebiasin-1.